A 314-amino-acid chain; its full sequence is Large ribosomal subunit protein uL10 (314 aa).

The disordered stretch occupies residues 285–314 (GAAAGGAAAEEEKEEEEESDEEGGFGDLFG). Positions 293–308 (AEEEKEEEEESDEEGG) are enriched in acidic residues. Position 303 is a phosphoserine; by CK1 (Ser-303).

Belongs to the universal ribosomal protein uL10 family. In terms of assembly, component of the large ribosomal subunit. P0 forms a pentameric complex by interaction with dimers of P1 and P2. Phosphorylated.

Functionally, ribosomal protein P0 is the functional equivalent of E.coli protein L10. The sequence is that of Large ribosomal subunit protein uL10 from Podospora anserina (Pleurage anserina).